We begin with the raw amino-acid sequence, 518 residues long: ATP synthase subunit alpha (518 aa).

169-176 (GDRQTGKT) serves as a coordination point for ATP.

It belongs to the ATPase alpha/beta chains family. In terms of assembly, F-type ATPases have 2 components, CF(1) - the catalytic core - and CF(0) - the membrane proton channel. CF(1) has five subunits: alpha(3), beta(3), gamma(1), delta(1), epsilon(1). CF(0) has three main subunits: a(1), b(2) and c(9-12). The alpha and beta chains form an alternating ring which encloses part of the gamma chain. CF(1) is attached to CF(0) by a central stalk formed by the gamma and epsilon chains, while a peripheral stalk is formed by the delta and b chains.

It localises to the cell membrane. The catalysed reaction is ATP + H2O + 4 H(+)(in) = ADP + phosphate + 5 H(+)(out). Produces ATP from ADP in the presence of a proton gradient across the membrane. The alpha chain is a regulatory subunit. In Mycoplasma pneumoniae (strain ATCC 29342 / M129 / Subtype 1) (Mycoplasmoides pneumoniae), this protein is ATP synthase subunit alpha.